The sequence spans 1200 residues: Metabotropic glycine receptor (1200 aa).

Positions 1–24 are cleaved as a signal peptide; that stretch reads MGAMAYSLLFCLLLAHLGLGEVGA. A disordered region spans residues 25–62; sequence SLDPPGRPDSPRERTPRGKQHGQQLPRASAPDPSIPWS. The Extracellular segment spans residues 25 to 417; it reads SLDPPGRPDS…CFVQEDKYLR (393 aa). The tract at residues 85-281 is cache-like region; the sequence is YLYTGDFHQL…CENGSYKPGW (197 aa). 2 N-linked (GlcNAc...) asparagine glycosylation sites follow: Asn98 and Asn143. Cys99 and Cys272 are disulfide-bonded. Positions 172 and 173 each coordinate glycine. N-linked (GlcNAc...) asparagine glycosylation is present at Asn215. The segment at 234–253 is disordered; that stretch reads LHRRGSNQGPRGLGHSWRRR. Glu271 is a glycine binding site. N-linked (GlcNAc...) asparagine glycosylation occurs at Asn274. Residue Asp307 participates in glycine binding. The N-linked (GlcNAc...) asparagine glycan is linked to Asn333. The chain crosses the membrane as a helical span at residues 418–439; that stretch reads LAIISFQALCMLLDFVSMLVVY. The Cytoplasmic portion of the chain corresponds to 440 to 451; that stretch reads HFRKAKSIRASG. The helical transmembrane segment at 452–474 threads the bilayer; the sequence is LILLETILFGSLLLYFPVVILYF. Over 475–478 the chain is Extracellular; sequence EPST. Residues 479–501 traverse the membrane as a helical segment; it reads FRCILLRWARLLGFATVYGTVTL. Residues Cys481 and Cys573 are joined by a disulfide bond. The Cytoplasmic segment spans residues 502-525; that stretch reads KLHRVLKVFLSRTAQRIPYMTGGR. Residues 526 to 547 form a helical membrane-spanning segment; that stretch reads VMRMLAVIVLVVFWFLVGWTSS. The Extracellular portion of the chain corresponds to 548-576; the sequence is MCQNLERDILLVGQGQTSDHLTFNMCLID. A helical membrane pass occupies residues 577–597; sequence RWDYMTAVAEFLFLLWGIYLC. The Cytoplasmic segment spans residues 598–611; the sequence is YAVRTVPSAFHEPR. The chain crosses the membrane as a helical span at residues 612–633; it reads YMAVAVHNELIITAIFHTIRFV. Topologically, residues 634-642 are extracellular; the sequence is LASRLQPDW. Residues 643–664 form a helical membrane-spanning segment; that stretch reads MLMLYFAHAHLTVTVTIGLLLI. At 665–1200 the chain is on the cytoplasmic side; that stretch reads PKFSHSSNNP…SANKIPGPQK (536 aa). A phosphoserine mark is found at Ser694, Ser705, and Ser708. The tract at residues 757–875 is disordered; it reads RITEIPETVS…EAESTESVPL (119 aa). Basic and acidic residues-rich tracts occupy residues 769-781 and 819-828; these read CSKE…DHSA and STYDHVRDQT. A Glycyl lysine isopeptide (Lys-Gly) (interchain with G-Cter in ubiquitin) cross-link involves residue Lys774. Over residues 845 to 856 the composition is skewed to low complexity; sequence ENSTLESLSSKK. Ser865 and Ser944 each carry phosphoserine. The segment at 947-988 is disordered; it reads DNVETIPNSGHMEEPRKPQKSGIMKQQRVSLPTANPDVSSGI. The span at 973–988 shows a compositional bias: polar residues; the sequence is QRVSLPTANPDVSSGI. The VCPWE motif 1 motif lies at 1000–1004; sequence VCPWE. At Ser1059 the chain carries Phosphoserine. The VCPWE motif 2 motif lies at 1065–1069; it reads VCPWE. At Ser1074 the chain carries Phosphoserine. The segment at 1130 to 1160 is disordered; that stretch reads QMGDQEKQTSSSVDIIPGSCNSSNNSHQPLT. The VCPWE motif 3 motif lies at 1165 to 1169; it reads VCPWE. The tract at residues 1177–1200 is disordered; it reads NAERSVTLPASSALSANKIPGPQK. Residues 1178 to 1191 are compositionally biased toward polar residues; it reads AERSVTLPASSALS.

This sequence belongs to the G-protein coupled receptor 3 family. Homodimer. Associates with the RGS7-GNB5 complex, promoting its localization to the cell membrane and regulating its GTPase activator activity. Interacts (via VCPWE motifs) with GNAO1. Interacts with GPC4. Interacts with EGFLAM. As to expression, highly expressed in brain. Expressed in several brain regions including the cerebral cortex, hippocampus, cerebellum and caudate putamen. Only expressed in neurons, and not in microglia, oligodendrocytes or astrocytes. Expressed in the visual center of the cerebral cortex. Also expressed in the eye, including photoreceptors, ganglion cells and trabecular meshwork.

Its subcellular location is the cell membrane. It is found in the postsynaptic cell membrane. The protein localises to the presynaptic cell membrane. The protein resides in the nucleus. Metabotropic receptor for glycine that controls synapse formation and function in the brain. Acts as an atypical G-protein coupled receptor that recruits and regulates the RGS7-GNB5 complex instead of activating G proteins. In absence of glycine ligand, promotes the GTPase activator activity of RGS7, increasing the GTPase activity of G protein alpha subunits, thereby driving them into their inactive GDP-bound form. Glycine-binding changes the conformation of the intracellular surface, inhibiting the GTPase activator activity of the RGS7-GNB5 complex, promoting G protein alpha subunits into their active GTP-bound form and regulating cAMP levels. Also able to bind taurine, a compound closely related to glycine, but with a two-fold lower affinity. Glycine receptor-dependent regulation of cAMP controls key ion channels, kinases and neurotrophic factors involved in neuronal excitability and synaptic transmission. Plays a pivotal role in regulating mood and cognition via its ability to regulate neuronal excitability in L2/L3 pyramidal neurons of the prefrontal cortex. Also involved in spatial learning by regulating hippocampal CA1 neuronal excitability. Acts as a synaptic organizer in the hippocampus, required for proper mossy fiber-CA3 neurocircuitry establishment, structure and function: induces presynaptic differentiation in contacting axons via its interaction with GPC4. In addition to glycine, may also act as a receptor for osteocalcin (Bglap or Bglap2) hormone: osteocalcin-binding initiates a signaling response that prevents neuronal apoptosis in the hippocampus and regulates the synthesis of neurotransmitters. The polypeptide is Metabotropic glycine receptor (Mus musculus (Mouse)).